The sequence spans 45 residues: Thymosin beta-15A (45 aa).

2 stretches are compositionally biased toward basic and acidic residues: residues 1–27 and 35–45; these read MSDKPDLSEVEKFDRSKLKKTNTEEKN and IQQEKECVQTS. Residues 1–45 form a disordered region; the sequence is MSDKPDLSEVEKFDRSKLKKTNTEEKNTLPSKETIQQEKECVQTS.

Belongs to the thymosin beta family. In terms of tissue distribution, neuroblastoma-specific.

Its subcellular location is the cytoplasm. The protein resides in the cytoskeleton. Its function is as follows. Plays an important role in the organization of the cytoskeleton. Binds to and sequesters actin monomers (G actin) and therefore inhibits actin polymerization. This is Thymosin beta-15A (TMSB15A) from Homo sapiens (Human).